Here is a 175-residue protein sequence, read N- to C-terminus: B9 domain-containing protein 2 (175 aa).

The C2 B9-type domain occupies 2–118; the sequence is AEVHVIGQII…ACPTWRPLGS (117 aa).

This sequence belongs to the B9D family. In terms of assembly, part of the tectonic-like complex (also named B9 complex). Interacts with TUBG1.

The protein resides in the cytoplasm. It localises to the cytoskeleton. The protein localises to the cilium basal body. Its subcellular location is the cilium axoneme. It is found in the nucleus. In terms of biological role, component of the tectonic-like complex, a complex localized at the transition zone of primary cilia and acting as a barrier that prevents diffusion of transmembrane proteins between the cilia and plasma membranes. The sequence is that of B9 domain-containing protein 2 (B9D2) from Homo sapiens (Human).